A 67-amino-acid polypeptide reads, in one-letter code: Penaeidin-4d (67 aa).

The N-terminal stretch at 1–19 is a signal peptide; the sequence is MRLLVCLVFLASFAMVCQG. Cystine bridges form between Cys-42/Cys-56, Cys-45/Cys-63, and Cys-57/Cys-64. Leu-66 is modified (leucine amide).

It belongs to the penaeidin family.

Its subcellular location is the cytoplasmic granule. Its function is as follows. Antibacterial and antifungal activity. Presents chitin-binding activity. In Penaeus setiferus (Atlantic white shrimp), this protein is Penaeidin-4d.